Consider the following 338-residue polypeptide: Malate dehydrogenase, mitochondrial (338 aa).

The N-terminal 24 residues, 1–24 (MLSALARPVGAALRRSFSTSAQNN), are a transit peptide targeting the mitochondrion. Residues 31-37 (GASGGIG) and Asp57 each bind NAD(+). An O-linked (GlcNAc) serine glycan is attached at Ser33. N6-acetyllysine; alternate is present on residues Lys78 and Lys91. Residues Lys78 and Lys91 each carry the N6-succinyllysine; alternate modification. Positions 104 and 110 each coordinate substrate. Residues Asn117 and 140-142 (ISN) each bind NAD(+). Position 142 (Asn142) interacts with substrate. An N6-acetyllysine modification is found at Lys165. Arg176 contacts substrate. Lys185 bears the N6-acetyllysine; alternate mark. Lys185 bears the N6-succinyllysine; alternate mark. His200 (proton acceptor) is an active-site residue. Lys203 is subject to N6-succinyllysine. Lys215 and Lys239 each carry N6-acetyllysine; alternate. Residues Lys215 and Lys239 each carry the N6-succinyllysine; alternate modification. N6-malonyllysine; alternate is present on Lys239. The residue at position 246 (Ser246) is a Phosphoserine. Position 251 (Met251) interacts with NAD(+). N6-succinyllysine is present on Lys269. An N6-acetyllysine; alternate mark is found at Lys296, Lys301, Lys307, Lys314, and Lys324. N6-succinyllysine; alternate occurs at positions 296, 301, 307, 314, and 324. N6-malonyllysine; alternate is present on Lys307. Residue Ser326 is modified to Phosphoserine. Lys328, Lys329, and Lys335 each carry N6-acetyllysine; alternate. Lys328 carries the post-translational modification N6-succinyllysine; alternate. Lys329 is modified (N6-malonyllysine; alternate). Lys335 is modified (N6-succinyllysine; alternate).

It belongs to the LDH/MDH superfamily. MDH type 1 family. Homodimer. In terms of processing, acetylation is enhanced after treatment either with trichostin A (TCA) or with nicotinamide (NAM) with the appearance of tri- and tetraacetylations. Glucose also increases acetylation. Expressed in flagella of epididymal sperm.

It localises to the mitochondrion matrix. It carries out the reaction (S)-malate + NAD(+) = oxaloacetate + NADH + H(+). Its activity is regulated as follows. Enzyme activity is enhanced by acetylation. The protein is Malate dehydrogenase, mitochondrial (Mdh2) of Rattus norvegicus (Rat).